Consider the following 201-residue polypeptide: Glycolipid transfer protein (201 aa).

The interval 28 to 168 (IATTQFLEAC…KDFYAKLGDD (141 aa)) is glycolipid transfer protein homology domain.

In terms of biological role, cargo transport protein that plays a key role in transport and secretion of liamocins, glycolipids (also called heavy oils) composed of a single mannitol or arabitol headgroup linked to either three, four or even six 3,5-dihydroxydecanoic ester tail-groups. The protein is Glycolipid transfer protein of Aureobasidium melanogenum (Aureobasidium pullulans var. melanogenum).